A 100-amino-acid polypeptide reads, in one-letter code: Apolipoprotein C-II (100 aa).

The signal sequence occupies residues 1-22 (MGSRFLLALFLVLLVLGCEVQA). A lipid binding region spans residues 66–74 (SVDEKLRDM). Residues 78-100 (SSAAMTTYASIFTDQIFTLLKGE) are lipoprotein lipase cofactor.

The protein belongs to the apolipoprotein C2 family. Proapolipoprotein C-II is synthesized as a sialic acid containing glycoprotein which is subsequently desialylated prior to its proteolytic processing. In terms of processing, proapolipoprotein C-II, the major form found in plasma undergoes proteolytic cleavage of its N-terminal hexapeptide to generate the mature form apolipoprotein C-II, which occurs as the minor form in plasma.

It is found in the secreted. In terms of biological role, component of chylomicrons, very low-density lipoproteins (VLDL), low-density lipoproteins (LDL), and high-density lipoproteins (HDL) in plasma. Plays an important role in lipoprotein metabolism as an activator of lipoprotein lipase. This chain is Apolipoprotein C-II (APOC2), found in Bramus lutescens (Transcaucasian mole vole).